A 257-amino-acid polypeptide reads, in one-letter code: Tryptophan synthase alpha chain (257 aa).

Residues glutamate 51 and aspartate 62 each act as proton acceptor in the active site.

Belongs to the TrpA family. In terms of assembly, tetramer of two alpha and two beta chains.

The enzyme catalyses (1S,2R)-1-C-(indol-3-yl)glycerol 3-phosphate + L-serine = D-glyceraldehyde 3-phosphate + L-tryptophan + H2O. The protein operates within amino-acid biosynthesis; L-tryptophan biosynthesis; L-tryptophan from chorismate: step 5/5. Its function is as follows. The alpha subunit is responsible for the aldol cleavage of indoleglycerol phosphate to indole and glyceraldehyde 3-phosphate. This is Tryptophan synthase alpha chain from Nitratidesulfovibrio vulgaris (strain ATCC 29579 / DSM 644 / CCUG 34227 / NCIMB 8303 / VKM B-1760 / Hildenborough) (Desulfovibrio vulgaris).